The chain runs to 133 residues: Ubiquitin-like FUBI-ribosomal protein eS30 fusion protein (133 aa).

The disordered stretch occupies residues 84-110; sequence GKVRGQTPKVAKQEKKKKKTGRAKRRM. The segment covering 97 to 110 has biased composition (basic residues); that stretch reads EKKKKKTGRAKRRM. Residue lysine 125 is modified to N6-succinyllysine.

It in the N-terminal section; belongs to the ubiquitin family. This sequence in the C-terminal section; belongs to the eukaryotic ribosomal protein eS30 family. Component of the 40S subunit of the ribosome. Post-translationally, FUBI is cleaved from ribosomal protein S30 by the deubiquitinase USP36 before the assembly of ribosomal protein S30 into pre-40S ribosomal particles. FUBI removal from ribosomal protein S30 is a crucial event for the final maturation of pre-40S particles.

The protein resides in the nucleus. The protein localises to the cytoplasm. Functionally, may have pro-apoptotic activity. Its function is as follows. Component of the 40S subunit of the ribosome. Contributes to the assembly and function of 40S ribosomal subunits. This Mus musculus (Mouse) protein is Ubiquitin-like FUBI-ribosomal protein eS30 fusion protein (Fau).